The primary structure comprises 475 residues: B-type cell cycle switch protein ccs52A (475 aa).

Residues 1–29 (MDGTGNRNPPPTSTVGDNSPPPEPSPESL) are disordered. Positions 7–28 (RNPPPTSTVGDNSPPPEPSPES) match the PEST motif motif. Phosphoserine occurs at positions 43 and 45. A C-box motif is present at residues 51–57 (DRFIPSR). A CSM motif motif is present at residues 80–91 (AYTTLLRTALFG). T99 is subject to Phosphothreonine. Phosphoserine occurs at positions 144 and 155. WD repeat units follow at residues 166–203 (QDDFYLNLVDWSSHNVLAVGLGNCVYLWNACSSKVTKL), 207–246 (GVDDCVCSVGWAQRGTHLAVGTNNGKVQIWDAARCKKIRS), 249–289 (GHRL…SKLS), 290–329 (GHKSEVCGLKWSYDNRELASGGNDNKLFVWNQHSTQPVLK), 332–374 (EHTA…HLSC), 376–417 (DTGS…KLAT), and 420–459 (GHTYRVLYLAISPDGQTIVTGAGDETLRFWNVFPSPKSQN). S454 is modified (phosphoserine).

This sequence belongs to the WD repeat CDC20/Fizzy family. Mostly expressed in nodules, and, to a lower extent, in root tips, stems, hypocotyls, leaves, flower buds and flowers.

The protein localises to the nucleus. It participates in protein modification; protein ubiquitination. In terms of biological role, component of the anaphase promoting complex/cyclosome (APC/C), a cell cycle-regulated E3 ubiquitin-protein ligase complex that controls progression through mitosis and the G1 phase of the cell cycle. Required to switch form cell proliferation to cell differentiation, endoreduplication and ploidy-dependent cell enlargement, including during nodulation, before nodule differentiation. Involved in root-knot nematode Meloidogyne incognita giant cells formation. The chain is B-type cell cycle switch protein ccs52A from Medicago truncatula (Barrel medic).